The chain runs to 270 residues: Tetraspanin-2 (270 aa).

Topologically, residues 1–8 (MALANNLT) are cytoplasmic. Residues 9–29 (AILNLLALLCSIPITASGIWL) traverse the membrane as a helical segment. Residues 30–42 (ASKPDNECVNLLR) are Extracellular-facing. The helical transmembrane segment at 43 to 63 (WPVVVLGVLILVVSATGFIGA) threads the bilayer. The Cytoplasmic segment spans residues 64-74 (YKYKETLLAVY). A helical transmembrane segment spans residues 75 to 95 (LCCMAILIGLLLVVLIFAFVV). Residues 96–232 (TRPDGSYRVP…NLRKEWRKAN (137 aa)) lie on the Extracellular side of the membrane. The chain crosses the membrane as a helical span at residues 233–253 (LILIITVVVLIWVYVIACSAF). The Cytoplasmic portion of the chain corresponds to 254–270 (RNAQTEDLFRKYKQGWV).

Belongs to the tetraspanin (TM4SF) family.

The protein resides in the membrane. Its function is as follows. May be involved in the regulation of cell differentiation. The chain is Tetraspanin-2 (TET2) from Arabidopsis thaliana (Mouse-ear cress).